A 319-amino-acid polypeptide reads, in one-letter code: Cytochrome f (319 aa).

Residues 1–35 form the signal peptide; sequence MQKKDVCEYITKWVSVTISTLVTIGVLVFPLSSEA. Heme contacts are provided by Tyr-36, Cys-56, Cys-59, and His-60. A helical membrane pass occupies residues 285 to 305; the sequence is IQGLLVFFASVVLAQIFLVLK.

Belongs to the cytochrome f family. In terms of assembly, the 4 large subunits of the cytochrome b6-f complex are cytochrome b6, subunit IV (17 kDa polypeptide, petD), cytochrome f and the Rieske protein, while the 4 small subunits are PetG, PetL, PetM and PetN. The complex functions as a dimer. Heme serves as cofactor.

It is found in the plastid. It localises to the chloroplast thylakoid membrane. In terms of biological role, component of the cytochrome b6-f complex, which mediates electron transfer between photosystem II (PSII) and photosystem I (PSI), cyclic electron flow around PSI, and state transitions. The polypeptide is Cytochrome f (Zygnema circumcarinatum (Green alga)).